The sequence spans 627 residues: Lactose permease (627 aa).

A permease region spans residues methionine 1–glutamine 460. Helical transmembrane passes span alanine 13 to valine 33, isoleucine 46 to leucine 66, tryptophan 84 to glycine 104, proline 111 to phenylalanine 131, valine 159 to phenylalanine 179, tryptophan 193 to leucine 213, leucine 244 to leucine 264, leucine 281 to alanine 301, leucine 309 to glycine 329, valine 336 to isoleucine 356, tryptophan 392 to isoleucine 412, and valine 419 to phenylalanine 439. The PTS EIIA type-1 domain maps to aspartate 493–asparagine 597. At histidine 545 the chain carries Phosphohistidine; by HPr.

It in the N-terminal section; belongs to the sodium:galactoside symporter (TC 2.A.2) family.

It localises to the cell membrane. In terms of biological role, responsible for transport of beta-galactosides into the cell, with the concomitant uptake of protons (symport system), and also for transport of homologous and heterologous exchange of beta-galactosides. This Lactobacillus delbrueckii subsp. bulgaricus (strain ATCC 11842 / DSM 20081 / BCRC 10696 / JCM 1002 / NBRC 13953 / NCIMB 11778 / NCTC 12712 / WDCM 00102 / Lb 14) protein is Lactose permease (lacY).